A 358-amino-acid chain; its full sequence is DNA polymerase IV (358 aa).

A UmuC domain is found at 4-185 (IIHIDMDCYF…LSLRKIPGVG (182 aa)). Mg(2+)-binding residues include Asp8 and Asp103. The active site involves Glu104.

This sequence belongs to the DNA polymerase type-Y family. Monomer. Mg(2+) serves as cofactor.

The protein resides in the cytoplasm. The enzyme catalyses DNA(n) + a 2'-deoxyribonucleoside 5'-triphosphate = DNA(n+1) + diphosphate. Functionally, poorly processive, error-prone DNA polymerase involved in untargeted mutagenesis. Copies undamaged DNA at stalled replication forks, which arise in vivo from mismatched or misaligned primer ends. These misaligned primers can be extended by PolIV. Exhibits no 3'-5' exonuclease (proofreading) activity. May be involved in translesional synthesis, in conjunction with the beta clamp from PolIII. The protein is DNA polymerase IV of Shewanella baltica (strain OS185).